We begin with the raw amino-acid sequence, 1217 residues long: Genetic suppressor element 1 (1217 aa).

A disordered region spans residues 1 to 155; it reads MKGMSHEPKS…SRSSSGGRER (155 aa). Serine 10 carries the post-translational modification Phosphoserine. The segment covering 15 to 33 has biased composition (polar residues); it reads MLSTATRTTATVNPLTPSP. Composition is skewed to low complexity over residues 43–63 and 76–89; these read SPAT…FAAA and GSSL…VSSP. Serine 84 and serine 95 each carry phosphoserine. Residues 103–114 are compositionally biased toward low complexity; sequence VPMGPIIVPPGG. An Asymmetric dimethylarginine modification is found at arginine 305. Residues 321-403 adopt a coiled-coil conformation; the sequence is ERMSGLSAER…REKELLAAKA (83 aa). Disordered regions lie at residues 324–385 and 418–465; these read SGLS…EREL and RGHA…HHTV. Over residues 331–385 the composition is skewed to basic and acidic residues; sequence LQMDEELRREREREREREREREADREREKEREREREKEREQEKEREREKEREREL. The residue at position 433 (threonine 433) is a Phosphothreonine. The segment covering 450–465 has biased composition (low complexity); sequence PVQHPLHPVPTPHHTV. An N6-acetyllysine modification is found at lysine 496. Disordered regions lie at residues 526–579, 633–675, and 699–720; these read HLDM…QLHA, KAEE…GPFL, and FGEL…PRAP. Composition is skewed to basic and acidic residues over residues 551–561 and 633–645; these read NRHEPGGRDPP and KAEE…EPAP. A compositionally biased stretch (pro residues) spans 711 to 720; that stretch reads PYRPPVPRAP. An N6-acetyllysine modification is found at lysine 739. The residue at position 766 (serine 766) is a Phosphoserine. Disordered stretches follow at residues 807-858, 903-930, 948-981, and 1068-1122; these read KEEL…NNSP, ADSL…SLDV, EPGK…EAPG, and LQSS…PKRK. Residues 813-822 show a composition bias toward basic residues; it reads QKRRKRRRML. Phosphoserine occurs at positions 826 and 828. 2 stretches are compositionally biased toward polar residues: residues 831-840 and 847-858; these read TIQSKRQTPS and TRYSPDEMNNSP. Residue serine 857 is modified to Phosphoserine. The residue at position 907 (threonine 907) is a Phosphothreonine. Serine 909 is modified (phosphoserine). Over residues 1068-1085 the composition is skewed to polar residues; it reads LQSSSRAPPPQHNGQQEP. The segment covering 1099 to 1117 has biased composition (acidic residues); that stretch reads RDSEEEEEEDDEDGEDEEE. The residue at position 1101 (serine 1101) is a Phosphoserine. The stretch at 1127-1201 forms a coiled coil; it reads EAVFEAYQEH…ELDHLRKCLA (75 aa).

May be a component of a BHC histone deacetylase complex that contains HDAC1, HDAC2, HMG20B/BRAF35, KDM1A, RCOR1/CoREST, PHF21A/BHC80, ZMYM2, ZNF217, ZMYM3, GSE1 and GTF2I.

This Homo sapiens (Human) protein is Genetic suppressor element 1 (GSE1).